The sequence spans 255 residues: Indole-3-glycerol phosphate synthase (255 aa).

It belongs to the TrpC family.

The catalysed reaction is 1-(2-carboxyphenylamino)-1-deoxy-D-ribulose 5-phosphate + H(+) = (1S,2R)-1-C-(indol-3-yl)glycerol 3-phosphate + CO2 + H2O. It functions in the pathway amino-acid biosynthesis; L-tryptophan biosynthesis; L-tryptophan from chorismate: step 4/5. This Shouchella clausii (strain KSM-K16) (Alkalihalobacillus clausii) protein is Indole-3-glycerol phosphate synthase.